Reading from the N-terminus, the 313-residue chain is Formate-nitrite transporter (313 aa).

Residues 1 to 46 (MTKGSKYTIDPISVKTACTSEESYIRCVEYGKGKAHYPNLSLLAKA) lie on the Cytoplasmic side of the membrane. Residues 47–67 (ILAGVFVGVCAHASGIAGGHF) form a helical membrane-spanning segment. Topologically, residues 68-77 (YYHKLREHVG) are extracellular. The chain crosses the membrane as a helical span at residues 78 to 98 (ISMSAFVYGFTFPIAFLCIIA). Residues 99 to 127 (TGSDLFTGNTLAVTTALLQRKVTLLEYLR) lie on the Cytoplasmic side of the membrane. Residues 128–148 (VMSISLFGNYVGAVSFAFFVS) traverse the membrane as a helical segment. At 149-184 (HLSGAFKKHEEIGKNHIFQFLNDIAEKKVSHTFVQC) the chain is on the extracellular side. A helical membrane pass occupies residues 185 to 205 (VCLAIGCNIFVCLAVYFVLTI). The Cytoplasmic segment spans residues 206-210 (KDGSG). The helical transmembrane segment at 211-231 (MVFSVFFAVYAFAIAGYEHII) threads the bilayer. The Extracellular segment spans residues 232-256 (ANMYTLNLALMIEANVDWTKVYVDN). The helical transmembrane segment at 257–277 (LLPTLIGNYIAGAIVLACPLF) threads the bilayer. Topologically, residues 278-313 (YIYRHSYSDYEKTRGDGGNSGLKSLSIEMQNGSSGR) are cytoplasmic. The disordered stretch occupies residues 290–313 (TRGDGGNSGLKSLSIEMQNGSSGR). The segment covering 298 to 313 (GLKSLSIEMQNGSSGR) has biased composition (polar residues).

Belongs to the FNT transporter (TC 1.A.16) family. As to quaternary structure, homopentamer.

It is found in the cell membrane. The protein localises to the vacuole membrane. It catalyses the reaction (S)-lactate(in) + H(+)(in) = (S)-lactate(out) + H(+)(out). The enzyme catalyses formate(in) + H(+)(in) = formate(out) + H(+)(out). It carries out the reaction pyruvate(out) + H(+)(out) = pyruvate(in) + H(+)(in). The catalysed reaction is acetate(out) + H(+)(out) = acetate(in) + H(+)(in). Inhibited by the Malaria Box compound MMV007839 and its derivatives BH296 and BH267.meta. Functionally, monocarboxylate-proton symporter that mediates the efflux of the waste product lactate in the intraerythrocytic parasites; active in acidic-to-neutral pH range. Transports L-lactate. This chain is Formate-nitrite transporter, found in Plasmodium vivax.